The following is a 200-amino-acid chain: Recombination protein RecR (200 aa).

The segment at 59–74 (CSVCGSLDTSDPCAIC) adopts a C4-type zinc-finger fold. The Toprim domain maps to 82–177 (RLLCVVEEVG…SVTMLARGVP (96 aa)).

The protein belongs to the RecR family.

Its function is as follows. May play a role in DNA repair. It seems to be involved in an RecBC-independent recombinational process of DNA repair. It may act with RecF and RecO. The protein is Recombination protein RecR of Caulobacter sp. (strain K31).